The sequence spans 397 residues: Enoyl-[acyl-carrier-protein] reductase [NADH] FabV (397 aa).

Residues 48–53, 74–75, 111–112, and 139–140 each bind NAD(+); these read GASTGY, FE, DA, and LA. A substrate-binding site is contributed by Tyr-225. The active-site Proton donor is Tyr-235. NAD(+) contacts are provided by residues Lys-244 and 273 to 275; that span reads VVT.

This sequence belongs to the TER reductase family. Monomer.

It carries out the reaction a 2,3-saturated acyl-[ACP] + NAD(+) = a (2E)-enoyl-[ACP] + NADH + H(+). It participates in lipid metabolism; fatty acid biosynthesis. Its activity is regulated as follows. Resistant to triclosan. Involved in the final reduction of the elongation cycle of fatty acid synthesis (FAS II). Catalyzes the NADH-dependent reduction of the carbon-carbon double bond in the enoyl moiety that is covalently linked to an acyl carrier protein (ACP). The polypeptide is Enoyl-[acyl-carrier-protein] reductase [NADH] FabV (Aeromonas salmonicida (strain A449)).